The following is a 509-amino-acid chain: Methylmalonyl-CoA decarboxylase subunit alpha (509 aa).

The CoA carboxyltransferase N-terminal domain occupies 4–260 (VQEKIELLHE…NNMEDAPLVD (257 aa)). The CoA carboxyltransferase C-terminal domain maps to 267–503 (REDESLNSLL…SKRENRAPKK (237 aa)).

It belongs to the AccD/PCCB family. The methylmalonyl-CoA decarboxylase is composed of five subunits: the carboxyltransferase alpha subunit (MmdA), the tunnel beta subunit (MmdB), the biotin-containing gamma subunit (MmdC), and the delta (MmdD) and epsilon (MmdE) subunits. Interacts with the gamma subunit.

It is found in the cell membrane. The enzyme catalyses (S)-methylmalonyl-CoA + Na(+)(in) + H(+)(out) = propanoyl-CoA + Na(+)(out) + CO2. With respect to regulation, completely inhibited by avidin. Functionally, carboxyltransferase subunit of the sodium ion pump methylmalonyl-CoA decarboxylase, which converts the chemical energy of a decarboxylation reaction into an electrochemical gradient of Na(+) ions across the cytoplasmic membrane, thereby creating a sodium ion motive force that is used for ATP synthesis. The alpha subunit catalyzes the Na(+)-independent carboxyltransfer from methylmalonyl-CoA to the prosthetic biotin group located on the gamma subunit. Can also convert malonyl-CoA into acetyl-CoA. This Veillonella parvula (Staphylococcus parvulus) protein is Methylmalonyl-CoA decarboxylase subunit alpha.